A 388-amino-acid chain; its full sequence is Basigin (388 aa).

Positions 1–22 are cleaved as a signal peptide; it reads MAAALLLALAFTFLSGQGACAA. Topologically, residues 23 to 326 are extracellular; the sequence is AGFLKAPMSQ…ISLRVRSRLA (304 aa). In terms of domain architecture, Ig-like spans 37-120; it reads GGSVVLHCEA…SSDPDRNHLT (84 aa). 3 disulfide bridges follow: cysteine 44/cysteine 108, cysteine 157/cysteine 203, and cysteine 242/cysteine 304. An Ig-like C2-type domain is found at 138-219; that stretch reads EPGTIVTSVQ…VGRGNINVEG (82 aa). 3 N-linked (GlcNAc...) asparagine glycosylation sites follow: asparagine 160, asparagine 269, and asparagine 305. The region spanning 221–320 is the Ig-like V-type domain; the sequence is PRIKVGKKSE…GSARETISLR (100 aa). The helical transmembrane segment at 327 to 347 threads the bilayer; sequence ALWPFLGIVAEVLVLVTIIFI. The Cytoplasmic portion of the chain corresponds to 348-388; sequence YEKRRKPDQTLDEDDPGAAPLKGSGSHLNDKDKNVRQRNAT. The segment at 355 to 388 is disordered; it reads DQTLDEDDPGAAPLKGSGSHLNDKDKNVRQRNAT. Residue threonine 357 is modified to Phosphothreonine. Phosphoserine is present on serine 371.

In terms of assembly, homooligomer. Interacts with NXNL1, SLC2A1 and SLC16A1/GLUT1. Interacts with XKR8; promoting its localization at the cell membrane. Homooligomer. Interacts with SLC16A1; interaction mediates SLC16A1 targeting to the plasma membrane. Interacts with SLC16A3; interaction mediates SLC16A3 targeting to the plasma membrane. Interacts with VEGFA, KDR/VEGFR2, PPIA/CYPA, SLC16A12, SLC16A11, ATP1B2, MAG, L1CAM and AJAP1. Interacts with PPIL2; regulates BSG transport to the cell membrane. As to quaternary structure, interacts with SLC16A6; this interaction mediates targeting to the plasma membrane. As to expression, expressed in the skeletal muscle, liver, small intestine, kidney, testis, brain, heart and spleen. Also present in various immature cells and endothelia.

The protein resides in the cell membrane. It is found in the photoreceptor inner segment. It localises to the cell projection. Its subcellular location is the cilium. The protein localises to the photoreceptor outer segment. The protein resides in the endoplasmic reticulum membrane. It is found in the basolateral cell membrane. Essential for normal retinal maturation and development. Acts as a retinal cell surface receptor for NXNL1 and plays an important role in NXNL1-mediated survival of retinal cone photoreceptors. In association with glucose transporter SLC16A1/GLUT1 and NXNL1, promotes retinal cone survival by enhancing aerobic glycolysis and accelerating the entry of glucose into photoreceptors. Functionally, signaling receptor for cyclophilins, essential for PPIA/CYPA and PPIB/CYPB-dependent signaling related to chemotaxis and adhesion of immune cells. Plays an important role in targeting the monocarboxylate transporters SLC16A1/GLUT1 and SLC16A3 to the plasma membrane. Acts as a coreceptor for vascular endothelial growth factor receptor 2 (KDR/VEGFR2) in endothelial cells enhancing its VEGFA-mediated activation and downstream signaling. Promotes angiogenesis through EPAS1/HIF2A-mediated up-regulation of VEGFA and KDR/VEGFR2 in endothelial cells. Plays an important role in spermatogenesis; mediates interactions between germ cells and Sertoli cell and is essential for the development/differentiation of germ cells to round spermatids. In Rattus norvegicus (Rat), this protein is Basigin (Bsg).